A 626-amino-acid chain; its full sequence is MGKVIGIDLGTTNSAMAYYDGKDAKIIANKEGRNTTPSVVAFTDKGEVLVGEPAKRQAITNPERTIYSVKRIMGMMCNEPKAQEAKKHVQYKIVDKNGACAVEVDGKVYTPQEISAKILMKLKKDAEEFFGEEVTEAVITVPAYFNDSQRKATQEAGKIAGLNVLRIINEPTAAALAYGLDKKGEEKILVYDLGGGTFDVTVLEIGDGTFQVLATDGNAFLGGDDFDNRIVDWLISEFKAETGIDLSQDKMALQRLKDAAEQAKKELSTKEETEINLPFITADASGPKHLVKKLTRAKFEAMIDDLLQETLRHIDTALEDAGLSKDEIDEIVMVGGSTRIPKVQELVSNYFNGKKLNKSVNPDEVVALGAAIQAGVLKGDVKDVLLLDVTPLSLGIETLGGVMTKIIEKGTTIPVKKSQVFSTAEDNQTAVTIHVLQGEAELAKDNKSLGQFNLEGIPPAPRGVPQIEVTFDIDANGVLNVSAKDKTSGKEQKITITGSSTLSEEEIERMVREAEEANRKEKARIEAIKARNELDAVAYQAEKFINDNKDKLGDVSALEAKIKEAKELIEQQSEDKAKIEALKNEINTELQNVAQNMAQQQQAQGGAQQQNQNKGGDDDVIDAEVE.

Residue Thr197 is modified to Phosphothreonine; by autocatalysis. Low complexity predominate over residues 595–614; that stretch reads QNMAQQQQAQGGAQQQNQNK. A disordered region spans residues 595-626; sequence QNMAQQQQAQGGAQQQNQNKGGDDDVIDAEVE.

Belongs to the heat shock protein 70 family.

Functionally, acts as a chaperone. The sequence is that of Chaperone protein DnaK from Nautilia profundicola (strain ATCC BAA-1463 / DSM 18972 / AmH).